Consider the following 127-residue polypeptide: Odontogenesis-associated phosphoprotein (127 aa).

Residues 1-23 (MAPGFHFSWLLVSWLVVTTVKGQ) form the signal peptide.

Expressed in enamel organs and not expressed in the heart, kidney, or spleen.

The protein resides in the secreted. Its function is as follows. May promote nucleation of hydroxyapatite. In Rattus norvegicus (Rat), this protein is Odontogenesis-associated phosphoprotein.